The primary structure comprises 375 residues: Erythronate-4-phosphate dehydrogenase (375 aa).

2 residues coordinate substrate: Ser45 and Thr66. Residues Asp146, Thr175, 206 to 208, and Asp232 contribute to the NAD(+) site; that span reads ASR. Arg208 is an active-site residue. Glu237 is an active-site residue. Catalysis depends on His254, which acts as the Proton donor. Position 257 (Gly257) interacts with NAD(+). Tyr258 provides a ligand contact to substrate.

It belongs to the D-isomer specific 2-hydroxyacid dehydrogenase family. PdxB subfamily. As to quaternary structure, homodimer.

It is found in the cytoplasm. It carries out the reaction 4-phospho-D-erythronate + NAD(+) = (R)-3-hydroxy-2-oxo-4-phosphooxybutanoate + NADH + H(+). It participates in cofactor biosynthesis; pyridoxine 5'-phosphate biosynthesis; pyridoxine 5'-phosphate from D-erythrose 4-phosphate: step 2/5. Its function is as follows. Catalyzes the oxidation of erythronate-4-phosphate to 3-hydroxy-2-oxo-4-phosphonooxybutanoate. The polypeptide is Erythronate-4-phosphate dehydrogenase (Proteus mirabilis (strain HI4320)).